The chain runs to 325 residues: Short chain isoprenyl diphosphate synthase (325 aa).

Isopentenyl diphosphate-binding residues include lysine 44, arginine 47, and histidine 76. 2 residues coordinate Mg(2+): aspartate 83 and aspartate 87. Arginine 92 is a binding site for an all-trans-polyprenyl diphosphate. Arginine 93 lines the isopentenyl diphosphate pocket. An all-trans-polyprenyl diphosphate is bound by residues lysine 173, threonine 174, glutamine 211, lysine 228, and lysine 238.

The protein belongs to the FPP/GGPP synthase family. In terms of assembly, homodimer. The cofactor is Mg(2+).

The protein localises to the cytoplasm. The sequence is that of Short chain isoprenyl diphosphate synthase (idsA) from Methanothermobacter thermautotrophicus (strain ATCC 29096 / DSM 1053 / JCM 10044 / NBRC 100330 / Delta H) (Methanobacterium thermoautotrophicum).